The primary structure comprises 475 residues: UDP-N-acetylmuramate--L-alanine ligase (475 aa).

Residue 125 to 131 (GTHGKTT) coordinates ATP.

The protein belongs to the MurCDEF family.

The protein localises to the cytoplasm. It catalyses the reaction UDP-N-acetyl-alpha-D-muramate + L-alanine + ATP = UDP-N-acetyl-alpha-D-muramoyl-L-alanine + ADP + phosphate + H(+). Its pathway is cell wall biogenesis; peptidoglycan biosynthesis. Functionally, cell wall formation. The chain is UDP-N-acetylmuramate--L-alanine ligase from Haemophilus influenzae (strain PittGG).